We begin with the raw amino-acid sequence, 556 residues long: Oxygen-dependent choline dehydrogenase (556 aa).

4-33 (DYIIIGAGSAGNVLATRLTEDPNTTVLLLE) contacts FAD. Catalysis depends on His473, which acts as the Proton acceptor.

The protein belongs to the GMC oxidoreductase family. The cofactor is FAD.

The enzyme catalyses choline + A = betaine aldehyde + AH2. The catalysed reaction is betaine aldehyde + NAD(+) + H2O = glycine betaine + NADH + 2 H(+). Its pathway is amine and polyamine biosynthesis; betaine biosynthesis via choline pathway; betaine aldehyde from choline (cytochrome c reductase route): step 1/1. Functionally, involved in the biosynthesis of the osmoprotectant glycine betaine. Catalyzes the oxidation of choline to betaine aldehyde and betaine aldehyde to glycine betaine at the same rate. This chain is Oxygen-dependent choline dehydrogenase, found in Escherichia coli O17:K52:H18 (strain UMN026 / ExPEC).